Reading from the N-terminus, the 193-residue chain is dTTP/UTP pyrophosphatase (193 aa).

The active-site Proton acceptor is the D77.

The protein belongs to the Maf family. YhdE subfamily. A divalent metal cation serves as cofactor.

It is found in the cytoplasm. It carries out the reaction dTTP + H2O = dTMP + diphosphate + H(+). The enzyme catalyses UTP + H2O = UMP + diphosphate + H(+). Functionally, nucleoside triphosphate pyrophosphatase that hydrolyzes dTTP and UTP. May have a dual role in cell division arrest and in preventing the incorporation of modified nucleotides into cellular nucleic acids. This is dTTP/UTP pyrophosphatase from Bacteroides thetaiotaomicron (strain ATCC 29148 / DSM 2079 / JCM 5827 / CCUG 10774 / NCTC 10582 / VPI-5482 / E50).